The primary structure comprises 586 residues: Phosphomethylpyrimidine synthase (586 aa).

The segment at 1-59 (MKQSVSAEQIELKSSLPGSKKVYVDGPREGMKVPMREIEQSDTNGVPNPPIRVYDTSGP) is disordered. The segment covering 22–39 (VYVDGPREGMKVPMREIE) has biased composition (basic and acidic residues). Residues Asn-193, Met-222, Tyr-251, His-287, 307–309 (SRG), 348–351 (DGLR), and Glu-387 each bind substrate. Residue His-391 participates in Zn(2+) binding. Tyr-414 is a binding site for substrate. A Zn(2+)-binding site is contributed by His-455. Positions 535, 538, and 543 each coordinate [4Fe-4S] cluster.

The protein belongs to the ThiC family. It depends on [4Fe-4S] cluster as a cofactor.

It carries out the reaction 5-amino-1-(5-phospho-beta-D-ribosyl)imidazole + S-adenosyl-L-methionine = 4-amino-2-methyl-5-(phosphooxymethyl)pyrimidine + CO + 5'-deoxyadenosine + formate + L-methionine + 3 H(+). Its pathway is cofactor biosynthesis; thiamine diphosphate biosynthesis. In terms of biological role, catalyzes the synthesis of the hydroxymethylpyrimidine phosphate (HMP-P) moiety of thiamine from aminoimidazole ribotide (AIR) in a radical S-adenosyl-L-methionine (SAM)-dependent reaction. In Bacillus cereus (strain Q1), this protein is Phosphomethylpyrimidine synthase.